Here is a 76-residue protein sequence, read N- to C-terminus: Large ribosomal subunit protein eL20 (76 aa).

It belongs to the eukaryotic ribosomal protein eL20 family. As to quaternary structure, part of the 50S ribosomal subunit. Binds 23S rRNA.

This is Large ribosomal subunit protein eL20 from Methanococcus vannielii (strain ATCC 35089 / DSM 1224 / JCM 13029 / OCM 148 / SB).